We begin with the raw amino-acid sequence, 37 residues long: Large ribosomal subunit protein bL36B (37 aa).

The protein belongs to the bacterial ribosomal protein bL36 family.

In Kineococcus radiotolerans (strain ATCC BAA-149 / DSM 14245 / SRS30216), this protein is Large ribosomal subunit protein bL36B.